We begin with the raw amino-acid sequence, 381 residues long: Protein-glutamate methylesterase/protein-glutamine glutaminase (381 aa).

Residues 20 to 138 (RVMVVDDSVV…EIAAADIFKH (119 aa)) enclose the Response regulatory domain. At D71 the chain carries 4-aspartylphosphate. Residues 154–176 (PAALASAREPEPRPIQATPVPAH) form a disordered region. Positions 183 to 373 (PFSTHAPRAL…PLQQIAPKLV (191 aa)) constitute a CheB-type methylesterase domain. Active-site residues include S197, H225, and D321.

Belongs to the CheB family. In terms of processing, phosphorylated by CheA. Phosphorylation of the N-terminal regulatory domain activates the methylesterase activity.

It is found in the cytoplasm. The enzyme catalyses [protein]-L-glutamate 5-O-methyl ester + H2O = L-glutamyl-[protein] + methanol + H(+). It carries out the reaction L-glutaminyl-[protein] + H2O = L-glutamyl-[protein] + NH4(+). In terms of biological role, involved in chemotaxis. Part of a chemotaxis signal transduction system that modulates chemotaxis in response to various stimuli. Catalyzes the demethylation of specific methylglutamate residues introduced into the chemoreceptors (methyl-accepting chemotaxis proteins or MCP) by CheR. Also mediates the irreversible deamidation of specific glutamine residues to glutamic acid. This chain is Protein-glutamate methylesterase/protein-glutamine glutaminase, found in Nitrobacter hamburgensis (strain DSM 10229 / NCIMB 13809 / X14).